The chain runs to 896 residues: MEHAKLTKNLKLKIKNAQLTKAAGLDKLKQKLAQAGSSDTKNSPVSKAQTKEKSSKKTAGTTASAPEIESGATESTARRIRAKDRSSFAAEEPSTTVALPGDASHLTLDALPSADSTEPLSNSSQEKIVEDAVETPNSPQEDGKELQEEVANEQPARNEETPIIRTRTEPKSVVSIKPKFGPTGKHINHLLAKTFKAPAKETKAAAPAEETTQQTRPSVETASTKQQQPSGTNTRPAQSAPAYRRESTNNNNNSKRGPDRDRTKRSDENVKAFTGRDRYGLNEGSSEEDKWRKKRVHKTKKQSEEHVVQCPSHIKIALPITVKDLAAEMKLKASELIQKLFIHGMTYVVNDVLDSQTVVQYIGLEFGCTIEIDSSEKEKLCLVENTVRDEINETNPQKLVIRSPIVAFMGHVDHGKTTLIDALRQSNMAASEAGAITQHMGAFKCSTPVGEITVLDTPGHEAFSAMRARGAEVCDIVVLVVAGDEGIKEQTVEAIEHAKAANITIVVAINKCDKPNFNEETVYRQLAELNLLPEAWGGSIATINTSAKTGEGLQDLLEMLALQAEVLELKADPSARARGLVIESELHKGLGAVATVLVQNGTLHLGEALVFNDCYGKIKTMHNEHNQLLQSASPSTPVLITGLSAIPKAGDPFIVVKNEKVAKEIISARLAGQQRSAALQKKRPNFDAVLQNKKTLKLIIKADVQGSIEALAHSILNIRSEKVDVEILSSGVGDISESDIRLASASKATVIGFHTSVESHAESLIKSLNVKVCLFDIIYHAVDAIKEIMTGLLDPIAEEKNLGAAEIKATFKSSQLGTIYGCLVTEGTMVRNQKVRIIRDKEVLWKCSLSSLKRLKEDVKEVKKGMECGILLDNYQQAQIGDTLQCYEVIYHPQKL.

The disordered stretch occupies residues 32-306 (LAQAGSSDTK…HKTKKQSEEH (275 aa)). Composition is skewed to polar residues over residues 35–48 (AGSS…VSKA) and 114–126 (ADST…SSQE). The segment covering 156 to 170 (ARNEETPIIRTRTEP) has biased composition (basic and acidic residues). The segment covering 213-237 (QQTRPSVETASTKQQQPSGTNTRPA) has biased composition (polar residues). The span at 256–280 (RGPDRDRTKRSDENVKAFTGRDRYG) shows a compositional bias: basic and acidic residues. The tr-type G domain occupies 401–570 (IRSPIVAFMG…ALQAEVLELK (170 aa)). The segment at 410–417 (GHVDHGKT) is G1. 410–417 (GHVDHGKT) contributes to the GTP binding site. Residues 435-439 (AITQH) form a G2 region. The segment at 456 to 459 (DTPG) is G3. Residues 456–460 (DTPGH) and 510–513 (NKCD) each bind GTP. Positions 510 to 513 (NKCD) are G4. Residues 546 to 548 (SAK) form a G5 region.

Belongs to the TRAFAC class translation factor GTPase superfamily. Classic translation factor GTPase family. IF-2 subfamily.

It is found in the cytoplasm. In terms of biological role, one of the essential components for the initiation of protein synthesis. Protects formylmethionyl-tRNA from spontaneous hydrolysis and promotes its binding to the 30S ribosomal subunits. Also involved in the hydrolysis of GTP during the formation of the 70S ribosomal complex. The polypeptide is Translation initiation factor IF-2 (infB) (Chlamydia muridarum (strain MoPn / Nigg)).